The primary structure comprises 197 residues: GTP cyclohydrolase-2 (197 aa).

Position 50–54 (50–54 (RIHSE)) interacts with GTP. The Zn(2+) site is built by Cys55, Cys66, and Cys68. Residues Gln71, 93–95 (EGR), and Thr115 contribute to the GTP site. Asp127 functions as the Proton acceptor in the catalytic mechanism. Arg129 acts as the Nucleophile in catalysis. GTP is bound by residues Thr150 and Lys155.

It belongs to the GTP cyclohydrolase II family. Zn(2+) serves as cofactor.

It catalyses the reaction GTP + 4 H2O = 2,5-diamino-6-hydroxy-4-(5-phosphoribosylamino)-pyrimidine + formate + 2 phosphate + 3 H(+). The protein operates within cofactor biosynthesis; riboflavin biosynthesis; 5-amino-6-(D-ribitylamino)uracil from GTP: step 1/4. Its function is as follows. Catalyzes the conversion of GTP to 2,5-diamino-6-ribosylamino-4(3H)-pyrimidinone 5'-phosphate (DARP), formate and pyrophosphate. In Neisseria gonorrhoeae (strain ATCC 700825 / FA 1090), this protein is GTP cyclohydrolase-2.